The primary structure comprises 179 residues: Transcription factor 21 (179 aa).

Residues Asp19–Glu88 are disordered. Polar residues-rich tracts occupy residues Glu30–Pro49 and Ser70–Gln80. One can recognise a bHLH domain in the interval Val79–Leu131.

Efficient DNA binding requires dimerization with another bHLH protein. Forms a heterodimer with TCF3 and binds the E box (5'-CANNTG-3'). Expressed at high levels in lung, kidney, gut, heart, ovary and podocytes (visceral glomerular epithelial cells). Also found in spleen, large intestine, uterus, bladder and testis.

The protein localises to the nucleus. Functionally, involved in epithelial-mesenchymal interactions in kidney and lung morphogenesis that include epithelial differentiation and branching morphogenesis. May be involved in the organogenesis of the spleen and heart and in cardiac and coronary artery development. May function in the development and sex differentiation of gonad via transcriptional regulation of AD4BP/SF-1. In Mus musculus (Mouse), this protein is Transcription factor 21 (Tcf21).